We begin with the raw amino-acid sequence, 560 residues long: Nucleoprotein (560 aa).

The tract at residues leucine 54–isoleucine 236 is binding site for the cap structure m7GTP. Residues glycine 323–aspartate 332 show a composition bias toward polar residues. The disordered stretch occupies residues glycine 323–glutamine 349. Mn(2+) is bound by residues aspartate 380 and glutamate 382. Residues glutamate 390, cysteine 497, histidine 500, and cysteine 521 each coordinate Zn(2+). Position 525 (aspartate 525) interacts with Mn(2+).

It belongs to the arenaviridae nucleocapsid protein family. As to quaternary structure, homomultimerizes to form the nucleocapsid. Binds to viral genomic RNA. Interacts with glycoprotein G2. Interacts with protein Z; this interaction probably directs the encapsidated genome to budding sites. Interacts with protein L; this interaction does not interfere with Z-L interaction. Interacts with host IKBKE (via Protein kinase domain); the interaction inhibits IKBKE kinase activity.

The protein resides in the virion. It localises to the host cytoplasm. In terms of biological role, encapsidates the genome, protecting it from nucleases. The encapsidated genomic RNA is termed the nucleocapsid (NC). Serves as template for viral transcription and replication. The increased presence of protein N in host cell does not seem to trigger the switch from transcription to replication as observed in other negative strain RNA viruses. Through the interaction with host IKBKE, strongly inhibits the phosphorylation and nuclear translocation of host IRF3, a protein involved in interferon activation pathway, leading to the inhibition of interferon-beta and IRF3-dependent promoters activation. Also encodes a functional 3'-5' exoribonuclease that degrades preferentially dsRNA substrates and thereby participates in the suppression of interferon induction. This chain is Nucleoprotein, found in Cupixi mammarenavirus (isolate Rat/Brasil/BeAn 119303/1970) (CPXV).